The chain runs to 422 residues: Methylaspartate ammonia-lyase (422 aa).

Gln-175 lines the (2S,3S)-3-methyl-L-aspartate pocket. Residues Asp-239, Glu-276, and Asp-310 each contribute to the Mg(2+) site. Position 332 (Gln-332) interacts with (2S,3S)-3-methyl-L-aspartate. Lys-334 functions as the Proton acceptor in the catalytic mechanism. 363–364 (TC) is a binding site for (2S,3S)-3-methyl-L-aspartate.

It belongs to the methylaspartate ammonia-lyase family. In terms of assembly, homodimer. The cofactor is Mg(2+).

It carries out the reaction (2S,3S)-3-methyl-L-aspartate = mesaconate + NH4(+). Its pathway is amino-acid degradation; L-glutamate degradation via mesaconate pathway; acetate and pyruvate from L-glutamate: step 2/4. In terms of biological role, involved in the methylaspartate cycle. Catalyzes the formation of the alpha,beta-unsaturated bond by the reversible anti elimination of ammonia from L-threo-beta-methylaspartate (L-threo-(2S,3S)-3-methylaspartate) to give mesaconate. This Haloarcula marismortui (strain ATCC 43049 / DSM 3752 / JCM 8966 / VKM B-1809) (Halobacterium marismortui) protein is Methylaspartate ammonia-lyase (mal).